The sequence spans 800 residues: DNA topoisomerase 4 subunit A (800 aa).

Residues 31–495 (LPDVRDGLKP…EIEEIKIDKE (465 aa)) form the Topo IIA-type catalytic domain. Residue Tyr-119 is the O-(5'-phospho-DNA)-tyrosine intermediate of the active site.

It belongs to the type II topoisomerase GyrA/ParC subunit family. ParC type 2 subfamily. Heterotetramer composed of ParC and ParE.

Its subcellular location is the cell membrane. It carries out the reaction ATP-dependent breakage, passage and rejoining of double-stranded DNA.. In terms of biological role, topoisomerase IV is essential for chromosome segregation. It relaxes supercoiled DNA. Performs the decatenation events required during the replication of a circular DNA molecule. The polypeptide is DNA topoisomerase 4 subunit A (Staphylococcus aureus).